A 205-amino-acid polypeptide reads, in one-letter code: Glutathione peroxidase 1 (205 aa).

Residue Ser37 is modified to Phosphoserine. Sec52 is an active-site residue. A non-standard amino acid (selenocysteine) is located at residue Sec52. Lys91 and Lys117 each carry N6-acetyllysine; alternate. 2 positions are modified to N6-succinyllysine; alternate: Lys91 and Lys117. Residue Lys117 is glycosylated (N-linked (Glc) (glycation) lysine; in vitro). The residue at position 124 (Lys124) is an N6-acetyllysine. N6-acetyllysine; alternate is present on Lys151. Position 151 is an N6-succinyllysine; alternate (Lys151). 2 positions are modified to phosphoserine: Ser200 and Ser204.

Belongs to the glutathione peroxidase family. Homotetramer. Interacts with MIEN1. During periods of oxidative stress, Sec-52 may react with a superoxide radical, irreversibly lose hydroselenide and be converted to dehydroalanine.

The protein localises to the cytoplasm. Its subcellular location is the mitochondrion. The enzyme catalyses 2 glutathione + H2O2 = glutathione disulfide + 2 H2O. It catalyses the reaction a hydroperoxy polyunsaturated fatty acid + 2 glutathione = a hydroxy polyunsaturated fatty acid + glutathione disulfide + H2O. The catalysed reaction is tert-butyl hydroperoxide + 2 glutathione = tert-butanol + glutathione disulfide + H2O. It carries out the reaction cumene hydroperoxide + 2 glutathione = 2-phenylpropan-2-ol + glutathione disulfide + H2O. The enzyme catalyses (13S)-hydroperoxy-(9Z,11E)-octadecadienoate + 2 glutathione = (13S)-hydroxy-(9Z,11E)-octadecadienoate + glutathione disulfide + H2O. It catalyses the reaction (9S)-hydroperoxy-(10E,12Z)-octadecadienoate + 2 glutathione = (9S)-hydroxy-(10E,12Z)-octadecadienoate + glutathione disulfide + H2O. The catalysed reaction is (5S)-hydroperoxy-(6E,8Z,11Z,14Z)-eicosatetraenoate + 2 glutathione = (5S)-hydroxy-(6E,8Z,11Z,14Z)-eicosatetraenoate + glutathione disulfide + H2O. It carries out the reaction (12S)-hydroperoxy-(5Z,8Z,10E,14Z)-eicosatetraenoate + 2 glutathione = (12S)-hydroxy-(5Z,8Z,10E,14Z)-eicosatetraenoate + glutathione disulfide + H2O. The enzyme catalyses (12R)-hydroperoxy-(5Z,8Z,10E,14Z)-eicosatetraenoate + 2 glutathione = (12R)-hydroxy-(5Z,8Z,10E,14Z)-eicosatetraenoate + glutathione disulfide + H2O. It catalyses the reaction (15S)-hydroperoxy-(5Z,8Z,11Z,13E)-eicosatetraenoate + 2 glutathione = (15S)-hydroxy-(5Z,8Z,11Z,13E)-eicosatetraenoate + glutathione disulfide + H2O. The catalysed reaction is (5S)-hydroperoxy-(6E,8Z,11Z,14Z,17Z)-eicosapentaenoate + 2 glutathione = (5S)-hydroxy-(6E,8Z,11Z,14Z,17Z)-eicosapentaenoate + glutathione disulfide + H2O. It carries out the reaction (15S)-hydroperoxy-(5Z,8Z,11Z,13E,17Z)-eicosapentaenoate + 2 glutathione = (15S)-hydroxy-(5Z,8Z,11Z,13E,17Z)-eicosapentaenoate + glutathione disulfide + H2O. The enzyme catalyses (15S)-hydroperoxy-(11Z,13E)-eicosadienoate + 2 glutathione = (15S)-hydroxy-(11Z,13E)-eicosadienoate + glutathione disulfide + H2O. It catalyses the reaction (17S)-hydroperoxy-(4Z,7Z,10Z,13Z,15E,19Z)-docosahexaenoate + 2 glutathione = (17S)-hydroxy-(4Z,7Z,10Z,13Z,15E,19Z)-docosahexaenoate + glutathione disulfide + H2O. In terms of biological role, catalyzes the reduction of hydroperoxides in a glutathione-dependent manner thus regulating cellular redox homeostasis. Can reduce small soluble hydroperoxides such as H2O2, cumene hydroperoxide and tert-butyl hydroperoxide, as well as several fatty acid-derived hydroperoxides. In platelets catalyzes the reduction of 12-hydroperoxyeicosatetraenoic acid, the primary product of the arachidonate 12-lipoxygenase pathway. This Bos taurus (Bovine) protein is Glutathione peroxidase 1 (GPX1).